We begin with the raw amino-acid sequence, 362 residues long: Fe-S cluster assembly protein DRE2 (362 aa).

A disordered region spans residues 1 to 28; it reads MAPGLDLTPDFHPPTTTTTTTNNAPPQQ. A compositionally biased stretch (low complexity) spans 15-28; the sequence is TTTTTTTNNAPPQQ. The segment at 24 to 165 is N-terminal SAM-like domain; sequence APPQQRTLLL…KPEYAEEEAV (142 aa). The interval 166 to 254 is linker; that stretch reads PLRFGKKKAA…EETLLTEEDL (89 aa). Residues Cys-264, Cys-275, Cys-278, and Cys-280 each contribute to the [2Fe-2S] cluster site. The segment at 264-280 is fe-S binding site A; it reads CQPQPGKKRRACKDCTC. 4 residues coordinate [4Fe-4S] cluster: Cys-325, Cys-328, Cys-336, and Cys-339. 2 short sequence motifs (cx2C motif) span residues 325-328 and 336-339; these read CGSC and CSDC. The tract at residues 325-339 is fe-S binding site B; the sequence is CGSCYLGDAFRCSDC.

The protein belongs to the anamorsin family. In terms of assembly, monomer. Interacts with TAH18. Interacts with MIA40. Requires [2Fe-2S] cluster as cofactor. [4Fe-4S] cluster is required as a cofactor.

The protein resides in the cytoplasm. It is found in the mitochondrion intermembrane space. Functionally, component of the cytosolic iron-sulfur (Fe-S) protein assembly (CIA) machinery required for the maturation of extramitochondrial Fe-S proteins. Part of an electron transfer chain functioning in an early step of cytosolic Fe-S biogenesis, facilitating the de novo assembly of a [4Fe-4S] cluster on the scaffold complex CFD1-NBP35. Electrons are transferred to DRE2 from NADPH via the FAD- and FMN-containing protein TAH18. TAH18-DRE2 are also required for the assembly of the diferric tyrosyl radical cofactor of ribonucleotide reductase (RNR), probably by providing electrons for reduction during radical cofactor maturation in the catalytic small subunit RNR2. The sequence is that of Fe-S cluster assembly protein DRE2 from Chaetomium globosum (strain ATCC 6205 / CBS 148.51 / DSM 1962 / NBRC 6347 / NRRL 1970) (Soil fungus).